The sequence spans 346 residues: N-acetyl-gamma-glutamyl-phosphate reductase (346 aa).

Residue cysteine 149 is part of the active site.

The protein belongs to the NAGSA dehydrogenase family. Type 1 subfamily.

The protein localises to the cytoplasm. It catalyses the reaction N-acetyl-L-glutamate 5-semialdehyde + phosphate + NADP(+) = N-acetyl-L-glutamyl 5-phosphate + NADPH + H(+). Its pathway is amino-acid biosynthesis; L-arginine biosynthesis; N(2)-acetyl-L-ornithine from L-glutamate: step 3/4. Its function is as follows. Catalyzes the NADPH-dependent reduction of N-acetyl-5-glutamyl phosphate to yield N-acetyl-L-glutamate 5-semialdehyde. In Geobacter sp. (strain M21), this protein is N-acetyl-gamma-glutamyl-phosphate reductase.